Here is a 537-residue protein sequence, read N- to C-terminus: Oviduct-specific glycoprotein (537 aa).

The N-terminal stretch at 1 to 18 (LLLCVGLLLVLKHHDGAA) is a signal peptide. In terms of domain architecture, GH18 spans 19-382 (HKLVCYFTNW…HTLNNLLVND (364 aa)). Cysteine 23 and cysteine 48 form a disulfide bridge. Chitin contacts are provided by residues 68–69 (PQ), 95–98 (GGWN), tyrosine 139, 208–211 (LSYD), and tryptophan 352. Asparagine 399 carries N-linked (GlcNAc...) asparagine glycosylation. Disordered stretches follow at residues 446–475 (EIATPTRTPLSFGRHTAAPEGKTESPGEKP) and 498–537 (TGQKVTPPGRKAGVPEKVTTPSGKMTVTPDGRAETLERRL). Over residues 528–537 (GRAETLERRL) the composition is skewed to basic and acidic residues.

This sequence belongs to the glycosyl hydrolase 18 family. As to expression, oviduct.

The protein resides in the cytoplasmic vesicle. It is found in the secretory vesicle. In terms of biological role, binds to oocyte zona pellucida in vivo. May play a role in the fertilization process and/or early embryonic development. The sequence is that of Oviduct-specific glycoprotein (OVGP1) from Bos taurus (Bovine).